Consider the following 430-residue polypeptide: Na(+)/H(+) antiporter NhaA 2 (430 aa).

The next 10 membrane-spanning stretches (helical) occupy residues 11–31, 60–80, 97–117, 127–147, 181–201, 215–235, 288–308, 309–329, 356–376, and 393–413; these read FVHG…IAFI, LSLE…LVGL, VALA…LYTA, GWGV…ALLG, LNLT…YAGW, VLLW…GVLL, HALH…TNAG, VPVA…GLLL, WGHM…SLFV, and GVLL…LLGI.

Belongs to the NhaA Na(+)/H(+) (TC 2.A.33) antiporter family.

It is found in the cell membrane. It catalyses the reaction Na(+)(in) + 2 H(+)(out) = Na(+)(out) + 2 H(+)(in). In terms of biological role, na(+)/H(+) antiporter that extrudes sodium in exchange for external protons. This Deinococcus geothermalis (strain DSM 11300 / CIP 105573 / AG-3a) protein is Na(+)/H(+) antiporter NhaA 2.